We begin with the raw amino-acid sequence, 347 residues long: NADH-ubiquinone oxidoreductase chain 2 (347 aa).

A run of 10 helical transmembrane segments spans residues 13–33 (VILGTLIVMMSSHWLLIWIGF), 59–79 (YFFTQATASMLLMLAVLLNLM), 96–116 (MIMTMALTMKLGLAPFHFWVP), 122–142 (IPLSSGLILLTWQKLAPLTVL), 149–169 (INLTMLLTMSIASIAIGGWGG), 178–198 (IMAYSSIAHMGWMTTILIYNP), 200–220 (MTLLNLVIYILMTTTMFMLFM), 240–260 (IVTITLATLLSLGGLPPLTGF), 276–296 (IILPTIMAITALLNLFFYMRL), and 325–345 (LLTPMIVLSTLTLPPTPMIII).

This sequence belongs to the complex I subunit 2 family. In terms of assembly, core subunit of respiratory chain NADH dehydrogenase (Complex I) which is composed of 45 different subunits. Interacts with TMEM242.

It is found in the mitochondrion inner membrane. It carries out the reaction a ubiquinone + NADH + 5 H(+)(in) = a ubiquinol + NAD(+) + 4 H(+)(out). Functionally, core subunit of the mitochondrial membrane respiratory chain NADH dehydrogenase (Complex I) which catalyzes electron transfer from NADH through the respiratory chain, using ubiquinone as an electron acceptor. Essential for the catalytic activity and assembly of complex I. The sequence is that of NADH-ubiquinone oxidoreductase chain 2 from Molossus ater (Black mastiff bat).